Consider the following 235-residue polypeptide: Large ribosomal subunit protein uL1 (235 aa).

Belongs to the universal ribosomal protein uL1 family. Part of the 50S ribosomal subunit.

In terms of biological role, binds directly to 23S rRNA. The L1 stalk is quite mobile in the ribosome, and is involved in E site tRNA release. Its function is as follows. Protein L1 is also a translational repressor protein, it controls the translation of the L11 operon by binding to its mRNA. The chain is Large ribosomal subunit protein uL1 from Methylobacterium nodulans (strain LMG 21967 / CNCM I-2342 / ORS 2060).